The chain runs to 145 residues: ATP synthase epsilon chain (145 aa).

Over residues 93 to 104 (AEAEKARARAQE) the composition is skewed to basic and acidic residues. Positions 93 to 113 (AEAEKARARAQEALKNPDASK) are disordered.

This sequence belongs to the ATPase epsilon chain family. As to quaternary structure, F-type ATPases have 2 components, CF(1) - the catalytic core - and CF(0) - the membrane proton channel. CF(1) has five subunits: alpha(3), beta(3), gamma(1), delta(1), epsilon(1). CF(0) has three main subunits: a, b and c.

The protein resides in the cell inner membrane. Produces ATP from ADP in the presence of a proton gradient across the membrane. In Francisella philomiragia subsp. philomiragia (strain ATCC 25017 / CCUG 19701 / FSC 153 / O#319-036), this protein is ATP synthase epsilon chain.